The chain runs to 303 residues: 2-dehydropantoate 2-reductase (303 aa).

Residues 7-12 (GCGALG), asparagine 98, and alanine 122 contribute to the NADP(+) site. Substrate is bound at residue asparagine 98. The active-site Proton donor is the lysine 176. Positions 180, 184, 194, and 244 each coordinate substrate. Glutamate 256 serves as a coordination point for NADP(+).

Belongs to the ketopantoate reductase family. Monomer.

The protein localises to the cytoplasm. It carries out the reaction (R)-pantoate + NADP(+) = 2-dehydropantoate + NADPH + H(+). Its pathway is cofactor biosynthesis; (R)-pantothenate biosynthesis; (R)-pantoate from 3-methyl-2-oxobutanoate: step 2/2. Catalyzes the NADPH-dependent reduction of ketopantoate into pantoic acid. This Escherichia coli O157:H7 protein is 2-dehydropantoate 2-reductase (panE).